Consider the following 95-residue polypeptide: Small ribosomal subunit protein bS6 (95 aa).

This sequence belongs to the bacterial ribosomal protein bS6 family.

Its function is as follows. Binds together with bS18 to 16S ribosomal RNA. The protein is Small ribosomal subunit protein bS6 of Exiguobacterium sp. (strain ATCC BAA-1283 / AT1b).